The primary structure comprises 229 residues: Probable septum site-determining protein MinC (229 aa).

Belongs to the MinC family. As to quaternary structure, interacts with MinD and FtsZ.

Its function is as follows. Cell division inhibitor that blocks the formation of polar Z ring septums. Rapidly oscillates between the poles of the cell to destabilize FtsZ filaments that have formed before they mature into polar Z rings. Prevents FtsZ polymerization. The polypeptide is Probable septum site-determining protein MinC (Ruminiclostridium cellulolyticum (strain ATCC 35319 / DSM 5812 / JCM 6584 / H10) (Clostridium cellulolyticum)).